We begin with the raw amino-acid sequence, 85 residues long: MNYSTLIAVASLLTAGTESKKDGYPVKEGDCAFPCGYDNEYCDKLCKERKADSGYCYWGNILCYCYGLPDKAAIKGYGRCRPGKK.

An N-terminal signal peptide occupies residues 1-19; the sequence is MNYSTLIAVASLLTAGTES. Positions 21–81 constitute an LCN-type CS-alpha/beta domain; the sequence is KDGYPVKEGD…AAIKGYGRCR (61 aa). 4 disulfides stabilise this stretch: Cys-31–Cys-80, Cys-35–Cys-56, Cys-42–Cys-63, and Cys-46–Cys-65. Proline amide is present on Pro-82.

This sequence belongs to the long (4 C-C) scorpion toxin superfamily. Sodium channel inhibitor family. Alpha subfamily. As to expression, expressed by the venom gland.

The protein localises to the secreted. In terms of biological role, alpha toxins bind voltage-independently at site-3 of sodium channels (Nav) and inhibit the inactivation of the activated channels, thereby blocking neuronal transmission. This is Toxin To9 from Tityus obscurus (Amazonian scorpion).